Reading from the N-terminus, the 146-residue chain is Prefoldin subunit alpha (146 aa).

The protein belongs to the prefoldin alpha subunit family. In terms of assembly, heterohexamer of two alpha and four beta subunits.

The protein resides in the cytoplasm. Functionally, molecular chaperone capable of stabilizing a range of proteins. Seems to fulfill an ATP-independent, HSP70-like function in archaeal de novo protein folding. This is Prefoldin subunit alpha from Methanobrevibacter smithii (strain ATCC 35061 / DSM 861 / OCM 144 / PS).